The following is a 237-amino-acid chain: Ribosomal RNA large subunit methyltransferase E (237 aa).

The S-adenosyl-L-methionine site is built by G80, W82, D108, D124, and D148. K188 acts as the Proton acceptor in catalysis.

The protein belongs to the class I-like SAM-binding methyltransferase superfamily. RNA methyltransferase RlmE family.

Its subcellular location is the cytoplasm. The catalysed reaction is uridine(2552) in 23S rRNA + S-adenosyl-L-methionine = 2'-O-methyluridine(2552) in 23S rRNA + S-adenosyl-L-homocysteine + H(+). In terms of biological role, specifically methylates the uridine in position 2552 of 23S rRNA at the 2'-O position of the ribose in the fully assembled 50S ribosomal subunit. The sequence is that of Ribosomal RNA large subunit methyltransferase E from Jannaschia sp. (strain CCS1).